We begin with the raw amino-acid sequence, 153 residues long: Cytochrome c-type biogenesis protein CcmE (153 aa).

Residues methionine 1–arginine 6 are Cytoplasmic-facing. A helical; Signal-anchor for type II membrane protein transmembrane segment spans residues leucine 7–alanine 27. Residues leucine 28–proline 153 are Periplasmic-facing. Residues histidine 121 and tyrosine 125 each coordinate heme. Over residues alanine 131–histidine 141 the composition is skewed to polar residues. The tract at residues alanine 131 to proline 153 is disordered.

Belongs to the CcmE/CycJ family.

The protein localises to the cell inner membrane. Its function is as follows. Heme chaperone required for the biogenesis of c-type cytochromes. Transiently binds heme delivered by CcmC and transfers the heme to apo-cytochromes in a process facilitated by CcmF and CcmH. The chain is Cytochrome c-type biogenesis protein CcmE from Xylella fastidiosa (strain Temecula1 / ATCC 700964).